We begin with the raw amino-acid sequence, 64 residues long: Large ribosomal subunit protein bL35 (64 aa).

The segment covering 1 to 28 has biased composition (basic residues); it reads MPKMKTKSGAAKRFKKTAGGLKHKHAFK. Positions 1–64 are disordered; the sequence is MPKMKTKSGA…ARVERSLRLR (64 aa). The span at 53 to 64 shows a compositional bias: basic and acidic residues; the sequence is DVARVERSLRLR.

The protein belongs to the bacterial ribosomal protein bL35 family.

The sequence is that of Large ribosomal subunit protein bL35 from Pseudomonas aeruginosa (strain LESB58).